Consider the following 344-residue polypeptide: Proline-rich transmembrane protein 2 (344 aa).

Disordered regions lie at residues 1-220 (MAAS…GAPP) and 233-265 (GRAH…GGEG). Over 1–272 (MAASSSEVSE…GEGTQKPRDY (272 aa)) the chain is Cytoplasmic. Residue Ser28 is modified to Phosphoserine. Residues 69-82 (PETTETPVETPETV) are compositionally biased toward low complexity. Phosphothreonine occurs at positions 74 and 78. Over residues 124–143 (AEQQSAAPPEPTSEQALQLN) the composition is skewed to polar residues. A compositionally biased stretch (pro residues) spans 151-162 (TSQPPPKPPLQA). The segment covering 168–178 (ENPTTEVLTES) has biased composition (polar residues). Residues 201–211 (APQPHSPPSTK) are compositionally biased toward pro residues. The residue at position 242 (Ser242) is a Phosphoserine. Position 244 is an omega-N-methylarginine (Arg244). Ser252 and Ser253 each carry phosphoserine. An intramembrane region (helical) is located at residues 273 to 293 (IILAILSCFCPMWPVNIVAFA). Topologically, residues 294 to 321 (YAVMSRNSLQQGDVDGAQRLGRVAKLLS) are cytoplasmic. Residues 322–342 (IVALVGGVLIIIASCVINLGV) form a helical membrane-spanning segment. The Extracellular segment spans residues 343–344 (YK).

The protein belongs to the CD225/Dispanin family. In terms of assembly, component of the outer core of AMPAR complex. AMPAR complex consists of an inner core made of 4 pore-forming GluA/GRIA proteins (GRIA1, GRIA2, GRIA3 and GRIA4) and 4 major auxiliary subunits arranged in a twofold symmetry. One of the two pairs of distinct binding sites is occupied either by CNIH2, CNIH3 or CACNG2, CACNG3. The other harbors CACNG2, CACNG3, CACNG4, CACNG8 or GSG1L. This inner core of AMPAR complex is complemented by outer core constituents binding directly to the GluA/GRIA proteins at sites distinct from the interaction sites of the inner core constituents. Outer core constituents include at least PRRT1, PRRT2, CKAMP44/SHISA9, FRRS1L and NRN1. The proteins of the inner and outer core serve as a platform for other, more peripherally associated AMPAR constituents. Alone or in combination, these auxiliary subunits control the gating and pharmacology of the AMPAR complex and profoundly impact their biogenesis and protein processing. Interacts with intersectin 1/ITSN1. Interacts with SNARE complex components, including SNAP25, STX1A, SYT1 and SYT2; this interaction may inhibit SNARE complex formation. Neuron-specific expression throughout the brain, including hippocampus (at protein level).

The protein localises to the cell membrane. The protein resides in the presynaptic cell membrane. It is found in the synapse. It localises to the cell projection. Its subcellular location is the axon. The protein localises to the cytoplasmic vesicle. The protein resides in the secretory vesicle. It is found in the synaptic vesicle membrane. It localises to the postsynaptic density membrane. Its subcellular location is the dendritic spine. In terms of biological role, as a component of the outer core of AMPAR complex, may be involved in synaptic transmission in the central nervous system. In hippocampal neurons, in presynaptic terminals, plays an important role in the final steps of neurotransmitter release, possibly by regulating Ca(2+)-sensing. In the cerebellum, may inhibit SNARE complex formation and down-regulate short-term facilitation. This chain is Proline-rich transmembrane protein 2 (Prrt2), found in Rattus norvegicus (Rat).